We begin with the raw amino-acid sequence, 328 residues long: Stress response kinase A (328 aa).

Residue Asp-201 is the Proton acceptor of the active site. The Mg(2+) site is built by Asn-206 and Asp-217. Asp-217 is an active-site residue.

This sequence belongs to the SrkA/RdoA protein kinase family. Monomer. Mg(2+) serves as cofactor.

It localises to the cytoplasm. The enzyme catalyses L-seryl-[protein] + ATP = O-phospho-L-seryl-[protein] + ADP + H(+). The catalysed reaction is L-threonyl-[protein] + ATP = O-phospho-L-threonyl-[protein] + ADP + H(+). In terms of biological role, a protein kinase that phosphorylates Ser and Thr residues. Probably acts to suppress the effects of stress linked to accumulation of reactive oxygen species. Probably involved in the extracytoplasmic stress response. This Escherichia coli O157:H7 protein is Stress response kinase A.